Consider the following 241-residue polypeptide: uncharacterized protein (241 aa).

Disordered stretches follow at residues 19–59 (ERDR…QQLG), 101–139 (VRRP…ASRS), and 152–182 (RGCR…KPCS). A compositionally biased stretch (gly residues) spans 34 to 48 (ARGGRGLWTVGGGGS). A compositionally biased stretch (polar residues) spans 49–58 (PTETAESQQL). Residues 106–118 (PSVPSPLPKPPVP) show a composition bias toward pro residues.

This is an uncharacterized protein from Homo sapiens (Human).